We begin with the raw amino-acid sequence, 148 residues long: Lysozyme C-1 (148 aa).

An N-terminal signal peptide occupies residues 1–18 (MKALLTLGLLLLSVTAQA). The C-type lysozyme domain maps to 19 to 148 (KVYNRCELAR…LSQYIRNCGV (130 aa)). 4 disulfides stabilise this stretch: Cys-24/Cys-146, Cys-48/Cys-134, Cys-83/Cys-99, and Cys-95/Cys-113. Residues Glu-53 and Asp-71 contribute to the active site.

Belongs to the glycosyl hydrolase 22 family. Monomer. Expressed strongly only in small intestine.

It is found in the secreted. It catalyses the reaction Hydrolysis of (1-&gt;4)-beta-linkages between N-acetylmuramic acid and N-acetyl-D-glucosamine residues in a peptidoglycan and between N-acetyl-D-glucosamine residues in chitodextrins.. Functionally, lysozymes have primarily a bacteriolytic function; those in tissues and body fluids are associated with the monocyte-macrophage system and enhance the activity of immunoagents. Lyz1 is active against a range of Gram-positive and Gram-negative bacteria. Less effective than Lyz2 in killing Gram-negative bacteria. Lyz1 and Lyz2 are equally effective in killing Gram-positive bacteria. This Mus musculus (Mouse) protein is Lysozyme C-1 (Lyz1).